The primary structure comprises 216 residues: Probable GTP-binding protein EngB (216 aa).

In terms of domain architecture, EngB-type G spans 24–205 (ATPEIAFVGR…WARLAALAAE (182 aa)). Residues 32–39 (GRSNVGKS), 59–63 (GRTRA), 86–89 (DLPG), 153–156 (TKTD), and 184–186 (FSA) each bind GTP. The Mg(2+) site is built by Ser-39 and Thr-61.

It belongs to the TRAFAC class TrmE-Era-EngA-EngB-Septin-like GTPase superfamily. EngB GTPase family. The cofactor is Mg(2+).

Its function is as follows. Necessary for normal cell division and for the maintenance of normal septation. The sequence is that of Probable GTP-binding protein EngB from Anaeromyxobacter dehalogenans (strain 2CP-C).